Reading from the N-terminus, the 232-residue chain is 2,3,4,5-tetrahydropyridine-2,6-dicarboxylate N-acetyltransferase (232 aa).

It belongs to the transferase hexapeptide repeat family. DapH subfamily.

The catalysed reaction is (S)-2,3,4,5-tetrahydrodipicolinate + acetyl-CoA + H2O = L-2-acetamido-6-oxoheptanedioate + CoA. The protein operates within amino-acid biosynthesis; L-lysine biosynthesis via DAP pathway; LL-2,6-diaminopimelate from (S)-tetrahydrodipicolinate (acetylase route): step 1/3. In terms of biological role, catalyzes the transfer of an acetyl group from acetyl-CoA to tetrahydrodipicolinate. The polypeptide is 2,3,4,5-tetrahydropyridine-2,6-dicarboxylate N-acetyltransferase (Streptococcus suis (strain 98HAH33)).